We begin with the raw amino-acid sequence, 139 residues long: Small ribosomal subunit protein uS12m (139 aa).

A mitochondrion-targeting transit peptide spans 1–29 (MSWSGPLRGLNTSLTCGPALVPRLWATCS). The tract at residues 36 to 56 (MHRLGGPPKRPPQKLGPTEGR) is disordered.

It belongs to the universal ribosomal protein uS12 family. In terms of assembly, component of the mitochondrial ribosome small subunit (28S) which comprises a 12S rRNA and about 30 distinct proteins.

Its subcellular location is the mitochondrion. The sequence is that of Small ribosomal subunit protein uS12m (MRPS12) from Pongo abelii (Sumatran orangutan).